The following is a 533-amino-acid chain: uncharacterized protein (533 aa).

An N-terminal signal peptide occupies residues 1–21 (MVKVWKIGFGVFLPTALLFSA). The N-palmitoyl cysteine moiety is linked to residue Cys22. Cys22 carries the S-diacylglycerol cysteine lipid modification. The interval 91-111 (LSKNKEGQTASQTRSSSEQTT) is disordered. Positions 97–111 (GQTASQTRSSSEQTT) are enriched in polar residues.

It belongs to the MG067/MG068/MG395 family.

The protein localises to the cell membrane. This is an uncharacterized protein from Mycoplasma pneumoniae (strain ATCC 29342 / M129 / Subtype 1) (Mycoplasmoides pneumoniae).